Consider the following 196-residue polypeptide: uncharacterized protein (196 aa).

This is an uncharacterized protein from Mycoplasma genitalium (strain ATCC 33530 / DSM 19775 / NCTC 10195 / G37) (Mycoplasmoides genitalium).